A 182-amino-acid polypeptide reads, in one-letter code: Small ribosomal subunit protein uS4 (182 aa).

2 disordered regions span residues 1–23 (MGHP…ADRI) and 158–182 (SSVA…KDEE). One can recognise an S4 RNA-binding domain in the interval 103–170 (RRLQSLVFKR…AKQFETQETE (68 aa)). Positions 167 to 182 (QETEEVAAEEEPKDEE) are enriched in acidic residues.

Belongs to the universal ribosomal protein uS4 family. In terms of assembly, part of the 30S ribosomal subunit. Contacts protein S5. The interaction surface between S4 and S5 is involved in control of translational fidelity.

Its function is as follows. One of the primary rRNA binding proteins, it binds directly to 16S rRNA where it nucleates assembly of the body of the 30S subunit. Functionally, with S5 and S12 plays an important role in translational accuracy. In Methanosphaera stadtmanae (strain ATCC 43021 / DSM 3091 / JCM 11832 / MCB-3), this protein is Small ribosomal subunit protein uS4.